The primary structure comprises 149 residues: UPF0756 membrane protein BBR47_32760 (149 aa).

5 helical membrane passes run 3–23, 48–68, 85–105, 106–126, and 128–148; these read WISI…NATV, HGLQ…LASG, LLAV…TVLM, SQNP…VTFF, and GVAV…QFLP.

It belongs to the UPF0756 family.

The protein localises to the cell membrane. The polypeptide is UPF0756 membrane protein BBR47_32760 (Brevibacillus brevis (strain 47 / JCM 6285 / NBRC 100599)).